A 149-amino-acid polypeptide reads, in one-letter code: Large ribosomal subunit protein uL15 (149 aa).

The segment at 1 to 52 (MSELLKLHHLRPAPGSNKAKIRKGRGEASKGKTAGRGTKGTKARSTVPAGFE) is disordered.

Belongs to the universal ribosomal protein uL15 family. Part of the 50S ribosomal subunit.

In terms of biological role, binds to the 23S rRNA. In Thermobifida fusca (strain YX), this protein is Large ribosomal subunit protein uL15.